The chain runs to 244 residues: Eukaryotic translation initiation factor 4E type 1B (244 aa).

Over residues 1 to 26 (MNKVEGGGHKEEVVVKEKEVVKEKPS) the composition is skewed to basic and acidic residues. A disordered region spans residues 1–57 (MNKVEGGGHKEEVVVKEKEVVKEKPSEATAEGVQAGEAKDLPGSLKTQRRKAHREHP). An EIF4EBP1/2/3 binding region spans residues 65–68 (HPLQ). 84 to 85 (WQ) is an mRNA binding site. The segment at 101–105 (WAVYS) is EIF4EBP1/2/3 binding. An mRNA-binding site is contributed by 130 to 131 (WE). The interval 160–167 (ETLLCLVG) is EIF4EBP1/2/3 binding. Residues 185 to 190 (RTKRDK) and 233 to 235 (AKS) each bind mRNA.

Belongs to the eukaryotic initiation factor 4E family. EIF4F is a multi-subunit complex, the composition of which varies with external and internal environmental conditions. It is composed of at least EIF4A, EIF4E and EIF4G.

In terms of biological role, recognizes and binds the 7-methylguanosine-containing mRNA cap during an early step in the initiation of protein synthesis and facilitates ribosome binding by inducing the unwinding of the mRNAs secondary structures. The protein is Eukaryotic translation initiation factor 4E type 1B (Eif4e1b) of Mus musculus (Mouse).